A 70-amino-acid chain; its full sequence is Mu-agatoxin-Ao1a (70 aa).

The N-terminal stretch at 1 to 20 is a signal peptide; that stretch reads MKAIIFFCFLSVMVFIVAEA. A propeptide spanning residues 21–33 is cleaved from the precursor; that stretch reads SSLEALKIFEGER. Intrachain disulfides connect Cys-35-Cys-50, Cys-42-Cys-55, Cys-49-Cys-65, and Cys-57-Cys-63. Asparagine amide is present on Asn-69.

This sequence belongs to the neurotoxin 07 (Beta/delta-agtx) family. 04 (aga-5) subfamily. In terms of tissue distribution, expressed by the venom gland.

It localises to the secreted. Functionally, insecticidal neurotoxin that modulates the insect Nav channel (DmNaV1/tipE (para/tipE)) in a unique manner, with both the activation and inactivation processes being affected. The voltage dependence of activation is shifted toward more hyperpolarized potentials (analogous to site 4 toxins) and a non-inactivating persistent sodium current is induced (site 3-like action). Interestingly, both effects take place in a voltage-dependent manner, producing a bell-shaped curve between -80 and 0 mV. The polypeptide is Mu-agatoxin-Ao1a (Agelena orientalis (Funnel-web spider)).